Here is a 392-residue protein sequence, read N- to C-terminus: Glucan endo-1,3-beta-glucosidase 14 (392 aa).

A signal peptide spans 1 to 21 (MATHSLSFFFRVLLLLFLTLS). N-linked (GlcNAc...) asparagine glycosylation is found at asparagine 54 and asparagine 89. Glutamate 122 acts as the Proton donor in catalysis. The Nucleophile role is filled by glutamate 267. Residue serine 359 is the site of GPI-anchor amidated serine attachment. The propeptide at 360-392 (RATTIKILNLWRVVMGLAVAWFILDMGDKMRMR) is removed in mature form.

This sequence belongs to the glycosyl hydrolase 17 family.

It is found in the cell membrane. It localises to the secreted. Its subcellular location is the cell wall. The protein localises to the cytoplasm. The catalysed reaction is Hydrolysis of (1-&gt;3)-beta-D-glucosidic linkages in (1-&gt;3)-beta-D-glucans.. This chain is Glucan endo-1,3-beta-glucosidase 14, found in Arabidopsis thaliana (Mouse-ear cress).